The sequence spans 227 residues: Cytidylate kinase (227 aa).

ATP is bound at residue 7–15 (GPAGSGKST).

Belongs to the cytidylate kinase family. Type 1 subfamily.

The protein resides in the cytoplasm. The catalysed reaction is CMP + ATP = CDP + ADP. It catalyses the reaction dCMP + ATP = dCDP + ADP. The protein is Cytidylate kinase of Salinibacter ruber (strain DSM 13855 / M31).